A 957-amino-acid polypeptide reads, in one-letter code: Glycine dehydrogenase (decarboxylating) (957 aa).

Lys-708 bears the N6-(pyridoxal phosphate)lysine mark.

The protein belongs to the GcvP family. As to quaternary structure, the glycine cleavage system is composed of four proteins: P, T, L and H. Pyridoxal 5'-phosphate is required as a cofactor.

The catalysed reaction is N(6)-[(R)-lipoyl]-L-lysyl-[glycine-cleavage complex H protein] + glycine + H(+) = N(6)-[(R)-S(8)-aminomethyldihydrolipoyl]-L-lysyl-[glycine-cleavage complex H protein] + CO2. Functionally, the glycine cleavage system catalyzes the degradation of glycine. The P protein binds the alpha-amino group of glycine through its pyridoxal phosphate cofactor; CO(2) is released and the remaining methylamine moiety is then transferred to the lipoamide cofactor of the H protein. The sequence is that of Glycine dehydrogenase (decarboxylating) from Escherichia coli (strain UTI89 / UPEC).